Reading from the N-terminus, the 1576-residue chain is Disco-interacting protein 2 homolog B (1576 aa).

Residues Ser9, Ser50, and Ser53 each carry the phosphoserine modification. Residues 12-131 (AVAALPPEVR…PMPTKRRSTF (120 aa)) form the DMAP1-binding domain. The segment at 31 to 167 (LSEGDITQKG…AALSAALQQS (137 aa)) is disordered. A compositionally biased stretch (polar residues) spans 52-62 (YSPQTQETDSA). Over residues 70–83 (QTPAPSAAQTSAPS) the composition is skewed to low complexity. Thr71 bears the Phosphothreonine mark. Residues 92-104 (GARDERYRSDIHT) are compositionally biased toward basic and acidic residues. Phosphoserine is present on Ser100. A Phosphothreonine modification is found at Thr140. 3 positions are modified to phosphoserine: Ser146, Ser148, and Ser153. Positions 155 to 167 (RRQAALSAALQQS) are enriched in low complexity. Ser178, Ser193, and Ser203 each carry phosphoserine. A disordered region spans residues 179–201 (IQGSSTSSSASSTLSHGEVKGTS). Residues 182 to 193 (SSTSSSASSTLS) show a composition bias toward low complexity. The segment at 217 to 246 (SAPPDVTTTTSSSSSSSSIRPANIDLPPSG) is disordered. Over residues 223 to 234 (TTTTSSSSSSSS) the composition is skewed to low complexity. Ser259 carries the phosphoserine modification.

This sequence belongs to the DIP2 family. In terms of assembly, interacts with alpha-tubulin. Moderately expressed in adult brain, placenta, skeletal muscle, heart, kidney, pancreas, lung, spleen and colon. Expression was weaker in adult liver, kidney, spleen, and ovary, and in fetal brain and liver. In the brain, it is expressed in the cerebral cortex; the frontal, parietal, occipital and temporal lobes; the paracentral gyrus; the pons; the corpus callosum and the hippocampus. Highest expression levels in the brain were found in the cerebral cortex and the frontal and parietal lobes.

It localises to the cell projection. Its subcellular location is the dendrite. The protein localises to the axon. The protein resides in the perikaryon. Negatively regulates axonal outgrowth and is essential for normal synaptic transmission. Not required for regulation of axon polarity. Promotes acetylation of alpha-tubulin. In Homo sapiens (Human), this protein is Disco-interacting protein 2 homolog B (DIP2B).